We begin with the raw amino-acid sequence, 29 residues long: Cytochrome b6-f complex subunit 8 (29 aa).

The chain crosses the membrane as a helical span at residues 3–23; that stretch reads IVSLAWAGLMVVFTFSLSLVV.

Belongs to the PetN family. As to quaternary structure, the 4 large subunits of the cytochrome b6-f complex are cytochrome b6, subunit IV (17 kDa polypeptide, PetD), cytochrome f and the Rieske protein, while the 4 small subunits are PetG, PetL, PetM and PetN. The complex functions as a dimer.

It is found in the plastid. Its subcellular location is the chloroplast thylakoid membrane. Its function is as follows. Component of the cytochrome b6-f complex, which mediates electron transfer between photosystem II (PSII) and photosystem I (PSI), cyclic electron flow around PSI, and state transitions. In Arabis hirsuta (Hairy rock-cress), this protein is Cytochrome b6-f complex subunit 8.